The following is a 625-amino-acid chain: Interferon-induced GTP-binding protein Mx2 (625 aa).

Residues 29–302 enclose the Dynamin-type G domain; the sequence is DLALPAIAVI…LVFHIGRCLP (274 aa). Positions 39–46 are G1 motif; it reads GDQSSGKS. 39–46 serves as a coordination point for GTP; it reads GDQSSGKS. Residues 64 to 66 form a G2 motif region; that stretch reads VTR. A G3 motif region spans residues 140 to 143; sequence DLPG. Residues 140–144 and 209–212 contribute to the GTP site; these read DLPGI and TKPD. Residues 209–212 are G4 motif; it reads TKPD. The segment at 241 to 244 is G5 motif; the sequence is RCRG. Residues 539–625 enclose the GED domain; that stretch reads REELTCHLKS…TEALKYLAKF (87 aa).

The protein belongs to the TRAFAC class dynamin-like GTPase superfamily. Dynamin/Fzo/YdjA family.

It is found in the cytoplasm. In Ictalurus punctatus (Channel catfish), this protein is Interferon-induced GTP-binding protein Mx2 (mx2).